The primary structure comprises 310 residues: Glutaminase 1 (310 aa).

Substrate-binding residues include Ser66, Asn117, Glu161, Asn168, Tyr192, Tyr244, and Val262. The residue at position 294 (Lys294) is an N6-acetyllysine.

It belongs to the glutaminase family. In terms of assembly, homotetramer.

It carries out the reaction L-glutamine + H2O = L-glutamate + NH4(+). This is Glutaminase 1 from Escherichia coli O6:H1 (strain CFT073 / ATCC 700928 / UPEC).